Here is a 69-residue protein sequence, read N- to C-terminus: Nodulin-3 (69 aa).

Positions 1–24 (MAKILKFVFAIILFFSLFLLSMEA) are cleaved as a signal peptide.

The protein is Nodulin-3 (ENOD3) of Pisum sativum (Garden pea).